The following is a 586-amino-acid chain: Phosphomethylpyrimidine synthase (586 aa).

The disordered stretch occupies residues 1–58 (MKQSVSAEQIELKSSLPGSKKVYVDGTREGMKVPMREIEQSDTNGVQNPPIRVYDTSG). The span at 22 to 39 (VYVDGTREGMKVPMREIE) shows a compositional bias: basic and acidic residues. Substrate is bound by residues N193, M222, Y251, H287, 307–309 (SRG), 348–351 (DGLR), and E387. H391 is a Zn(2+) binding site. Residue Y414 participates in substrate binding. H455 lines the Zn(2+) pocket. [4Fe-4S] cluster is bound by residues C535, C538, and C543.

It belongs to the ThiC family. It depends on [4Fe-4S] cluster as a cofactor.

It catalyses the reaction 5-amino-1-(5-phospho-beta-D-ribosyl)imidazole + S-adenosyl-L-methionine = 4-amino-2-methyl-5-(phosphooxymethyl)pyrimidine + CO + 5'-deoxyadenosine + formate + L-methionine + 3 H(+). It participates in cofactor biosynthesis; thiamine diphosphate biosynthesis. Its function is as follows. Catalyzes the synthesis of the hydroxymethylpyrimidine phosphate (HMP-P) moiety of thiamine from aminoimidazole ribotide (AIR) in a radical S-adenosyl-L-methionine (SAM)-dependent reaction. The sequence is that of Phosphomethylpyrimidine synthase from Bacillus mycoides (strain KBAB4) (Bacillus weihenstephanensis).